The sequence spans 678 residues: Gamma-tubulin complex component 2 (678 aa).

5 triggers nucleus envelope localization regions span residues 63 to 116 (QELI…RIFP), 118 to 180 (CEYY…FYCQ), 290 to 318 (IPGF…GHNV), 472 to 548 (LSIV…EVLE), and 587 to 622 (PDVL…SQSH).

It belongs to the TUBGCP family. As to quaternary structure, part of the gamma-tubulin complex. Gamma-tubulin complex is composed of gamma-tubulin and GCP proteins (e.g. GCP2 and GCP3). Interacts directly with GCP3.

Its subcellular location is the cytoplasm. It localises to the cytoskeleton. The protein resides in the microtubule organizing center. It is found in the nucleus envelope. The protein localises to the cell cortex. Its function is as follows. Gamma-tubulin complex is necessary for microtubule nucleation at the microtubule organizing centers (MTOCs). Required for the positioning of the gamma-tubulin-containing complex on pre-existing microtubules and for the proper organization of cortical arrays. This chain is Gamma-tubulin complex component 2 (GCP2), found in Arabidopsis thaliana (Mouse-ear cress).